The chain runs to 360 residues: UDP-N-acetylglucosamine--N-acetylmuramyl-(pentapeptide) pyrophosphoryl-undecaprenol N-acetylglucosamine transferase (360 aa).

UDP-N-acetyl-alpha-D-glucosamine-binding positions include 14–16, Asn-131, Arg-167, Ser-195, Ile-249, and Gln-294; that span reads TGG.

It belongs to the glycosyltransferase 28 family. MurG subfamily.

It is found in the cell inner membrane. The enzyme catalyses di-trans,octa-cis-undecaprenyl diphospho-N-acetyl-alpha-D-muramoyl-L-alanyl-D-glutamyl-meso-2,6-diaminopimeloyl-D-alanyl-D-alanine + UDP-N-acetyl-alpha-D-glucosamine = di-trans,octa-cis-undecaprenyl diphospho-[N-acetyl-alpha-D-glucosaminyl-(1-&gt;4)]-N-acetyl-alpha-D-muramoyl-L-alanyl-D-glutamyl-meso-2,6-diaminopimeloyl-D-alanyl-D-alanine + UDP + H(+). The protein operates within cell wall biogenesis; peptidoglycan biosynthesis. Its function is as follows. Cell wall formation. Catalyzes the transfer of a GlcNAc subunit on undecaprenyl-pyrophosphoryl-MurNAc-pentapeptide (lipid intermediate I) to form undecaprenyl-pyrophosphoryl-MurNAc-(pentapeptide)GlcNAc (lipid intermediate II). This is UDP-N-acetylglucosamine--N-acetylmuramyl-(pentapeptide) pyrophosphoryl-undecaprenol N-acetylglucosamine transferase from Polaromonas naphthalenivorans (strain CJ2).